Consider the following 215-residue polypeptide: Large ribosomal subunit protein uL16 (215 aa).

This sequence belongs to the universal ribosomal protein uL16 family. Component of the small ribosomal subunit. Mature ribosomes consist of a small (40S) and a large (60S) subunit. The 40S subunit contains about 33 different proteins and 1 molecule of RNA (18S). The 60S subunit contains about 49 different proteins and 3 molecules of RNA (25S, 5.8S and 5S).

The protein is Large ribosomal subunit protein uL16 (RPL10) of Euglena gracilis.